A 199-amino-acid polypeptide reads, in one-letter code: Chaperone protein TorD (199 aa).

The protein belongs to the TorD/DmsD family. TorD subfamily.

The protein localises to the cytoplasm. Its function is as follows. Involved in the biogenesis of TorA. Acts on TorA before the insertion of the molybdenum cofactor and, as a result, probably favors a conformation of the apoenzyme that is competent for acquiring the cofactor. The protein is Chaperone protein TorD of Escherichia coli O8 (strain IAI1).